We begin with the raw amino-acid sequence, 403 residues long: Semaphorin-like protein A39 (403 aa).

Positions 1-14 (MIPLLFILFYFANG) are cleaved as a signal peptide. One can recognise a Sema domain in the interval 15–403 (IEWHKFETSE…MPQMKKILKM (389 aa)).

This sequence belongs to the semaphorin family. As to quaternary structure, interacts with host VESPR.

Its subcellular location is the secreted. Functionally, acts as a semaphorin-like protein and binds to host plexin C1 receptor. May alter the movement of host plexin C1-expressing cells including dendritic cells, monocytes, or granulocytes in the proximity of infected cells. May also regulate host cell cytoskeleton of neighboring cells to improve viral infection. The polypeptide is Semaphorin-like protein A39 (Homo sapiens (Human)).